A 101-amino-acid polypeptide reads, in one-letter code: Small ribosomal subunit protein uS14 (101 aa).

Belongs to the universal ribosomal protein uS14 family. Part of the 30S ribosomal subunit. Contacts proteins S3 and S10.

Binds 16S rRNA, required for the assembly of 30S particles and may also be responsible for determining the conformation of the 16S rRNA at the A site. The polypeptide is Small ribosomal subunit protein uS14 (Nitrosospira multiformis (strain ATCC 25196 / NCIMB 11849 / C 71)).